The following is a 294-amino-acid chain: MEKYLEKTKVLIEALPYIKKFYGKTIVIKYGGHAMVSDQLKEAVINDLVLMKFVGINPVVVHGGGPEISRMLNKLNIKSNFINGLRVTDEATLEVVEMVLVGKVNKEIVGLIEKAGGKAVGLSGKDAGLIKAHKKLAKNPEPTGEEYLDLGYVGEISEVNPEILLTLIDKGYIPVVAPVGSNGSGEFYNINADEVAAEVAVALKADKLIVLTDTPGILLNEKDENSLLSKATIAEVKELINRGVIRGGMIPKAESAISAIKRGVGSVHIIDGRIAHSLLLEIFTDAGVGTMLTP.

Substrate contacts are provided by residues 64 to 65, Arg-86, and Asn-189; that span reads GG.

It belongs to the acetylglutamate kinase family. ArgB subfamily.

It is found in the cytoplasm. The catalysed reaction is N-acetyl-L-glutamate + ATP = N-acetyl-L-glutamyl 5-phosphate + ADP. The protein operates within amino-acid biosynthesis; L-arginine biosynthesis; N(2)-acetyl-L-ornithine from L-glutamate: step 2/4. In terms of biological role, catalyzes the ATP-dependent phosphorylation of N-acetyl-L-glutamate. The polypeptide is Acetylglutamate kinase (Carboxydothermus hydrogenoformans (strain ATCC BAA-161 / DSM 6008 / Z-2901)).